We begin with the raw amino-acid sequence, 467 residues long: UDP-N-acetylmuramoylalanine--D-glutamate ligase (467 aa).

121–127 contacts ATP; sequence GTNGKST.

It belongs to the MurCDEF family.

The protein localises to the cytoplasm. The enzyme catalyses UDP-N-acetyl-alpha-D-muramoyl-L-alanine + D-glutamate + ATP = UDP-N-acetyl-alpha-D-muramoyl-L-alanyl-D-glutamate + ADP + phosphate + H(+). Its pathway is cell wall biogenesis; peptidoglycan biosynthesis. Functionally, cell wall formation. Catalyzes the addition of glutamate to the nucleotide precursor UDP-N-acetylmuramoyl-L-alanine (UMA). The polypeptide is UDP-N-acetylmuramoylalanine--D-glutamate ligase (Brucella suis biovar 1 (strain 1330)).